Consider the following 363-residue polypeptide: Proline/serine-rich coiled-coil protein 1 (363 aa).

Ser-22 carries the post-translational modification Phosphoserine. Repeat 1 spans residues 38–41 (PEKP). A disordered region spans residues 39-67 (EKPLRRGLSHRSDPNAVAPAPQGVRLSLG). Leu-42 is subject to Phosphoserine. Gly-45 is subject to Phosphothreonine. Phosphoserine is present on residues Ser-47, Ser-65, Ser-70, Ser-98, Ser-122, and Ser-140. Residues 68–71 (PLSP) form repeat 2. Residues 70–94 (SPEKLEEILDEANRLAAQLEQCALQ) are a coiled coil. A disordered region spans residues 95 to 363 (DRESAGEGLG…RKVAVPGPTR (269 aa)). The 4 X 4 AA repeats of P-X-X-P stretch occupies residues 103 to 246 (LGPRRVKPSP…HPSPPGPPTP (144 aa)). Positions 112-124 (PRRETFVLKDSPV) are enriched in basic and acidic residues. The segment covering 133–148 (SLTRSTPSPSSLTPRL) has biased composition (low complexity). A Phosphothreonine modification is found at Thr-145. Phosphoserine is present on residues Ser-186 and Ser-190. A compositionally biased stretch (polar residues) spans 186-196 (SPASSPLTRST). Residues 197-210 (PPVRGRAGPSGRAA) show a composition bias toward low complexity. Position 212 is a phosphoserine (Ser-212). Thr-215 carries the phosphothreonine modification. A run of 2 repeats spans residues 238-241 (PSPP) and 243-246 (PPTP).

It belongs to the PSRC1 family. Interacts with APC2. Interacts with KIF2A. Interacts with ANKRD53; recruits ANKRD53 to the spindle during mitosis. Post-translationally, phosphorylated during mitosis. In terms of tissue distribution, widely expressed in adult and fetal tissues, with highest expression in the adult brain and fetal thymus. Not detected in adult skeletal muscle.

It localises to the cytoplasm. The protein resides in the cytoskeleton. It is found in the spindle. The protein localises to the spindle pole. Its function is as follows. Required for normal progression through mitosis. Required for normal congress of chromosomes at the metaphase plate, and for normal rate of chromosomal segregation during anaphase. Plays a role in the regulation of mitotic spindle dynamics. Increases the rate of turnover of microtubules on metaphase spindles, and contributes to the generation of normal tension across sister kinetochores. Recruits KIF2A and ANKRD53 to the mitotic spindle and spindle poles. May participate in p53/TP53-regulated growth suppression. This chain is Proline/serine-rich coiled-coil protein 1 (PSRC1), found in Homo sapiens (Human).